A 217-amino-acid polypeptide reads, in one-letter code: Response regulator RR06 (217 aa).

A Response regulatory domain is found at 2–115; sequence NILVADDEEM…LLVKRIKALI (114 aa). A 4-aspartylphosphate modification is found at Asp51. The segment at residues 122–217 is a DNA-binding region (ompR/PhoB-type); sequence EDIWRYQDVT…VKNVGYKISL (96 aa).

Post-translationally, phosphorylated at threonine residues by StkP; threonine phosphorylation enhances RR06 binding to DNA and may also increase expression of CbpA. May be de-phosphorylated by PhpP.

Member of the two-component regulatory system HK06/RR06 involved in regulation of target genes, including choline-binding protein CbpA. Binds to the promoter region of CbpA and directly activates transcription. In Streptococcus pneumoniae serotype 2 (strain D39 / NCTC 7466), this protein is Response regulator RR06.